The chain runs to 193 residues: GTP cyclohydrolase 1 (193 aa).

Zn(2+)-binding residues include Cys73, His76, and Cys144.

It belongs to the GTP cyclohydrolase I family. Homomer.

The enzyme catalyses GTP + H2O = 7,8-dihydroneopterin 3'-triphosphate + formate + H(+). It functions in the pathway cofactor biosynthesis; 7,8-dihydroneopterin triphosphate biosynthesis; 7,8-dihydroneopterin triphosphate from GTP: step 1/1. The protein is GTP cyclohydrolase 1 of Hyperthermus butylicus (strain DSM 5456 / JCM 9403 / PLM1-5).